We begin with the raw amino-acid sequence, 309 residues long: ATP synthase gamma chain (309 aa).

It belongs to the ATPase gamma chain family. As to quaternary structure, F-type ATPases have 2 components, CF(1) - the catalytic core - and CF(0) - the membrane proton channel. CF(1) has five subunits: alpha(3), beta(3), gamma(1), delta(1), epsilon(1). CF(0) has three main subunits: a, b and c.

The protein localises to the cell membrane. Functionally, produces ATP from ADP in the presence of a proton gradient across the membrane. The gamma chain is believed to be important in regulating ATPase activity and the flow of protons through the CF(0) complex. This is ATP synthase gamma chain from Mycolicibacterium vanbaalenii (strain DSM 7251 / JCM 13017 / BCRC 16820 / KCTC 9966 / NRRL B-24157 / PYR-1) (Mycobacterium vanbaalenii).